A 1102-amino-acid chain; its full sequence is MAESSSDSDHVRYRDGLSRWATRSFQRGVGSHSTVDVTAKVNTITNTLQDTTRNLRHVDQMLGRYREYSTGQAGAVGQLKEDLEQSINQLRSQRLRRSSGGRSVSVTSLSASDLDGGAVTENLRFAPTSPLKDYDLQGIKRNRFRTGVRFVSETDDMVQLHTFHQSLRDLSSEQVRLGDDLNRELFRRSRSDAETKRVLEELTGKLNEVQKPDVVSDRVERRLQEIEREMRLERELVERRHDQLGLVSLKLQEALKKQEAKADENEDVIKRKLRQSETEKSQLEQELEISRRLLSQSESNRETLLHQVEELRTQLIKAEGDQRGLQHQVPCISKQPLSHQDDQGDDRRFRRGVEREKLSLEKQMADLRVQLNFNSMASELEEVKRCMERKDQEKATLAAQIENLTRDLENREKQQLQMLDQLTEIQNHFETCEANRKRTDLQLSELSQHAEEATKQAEHYLSEFQRSETLREEAEKRREDLKAKAQESIRQWKLKHKKLERSMEKQAETLVQLTEKNNQFIKERDELKSQLCAALQQIENLRKELNDVLSKRALQEEELHCKEKKLNDIESHQAELELEVKNSLDTIHRLENELKRQSKSQSQIKAEKIHLEEEITELKKSQSQDKVKLLEMQESIKDLSAIRADLANKLAEEEKAKKAVFRDLSELTAQVKSKEEETATAITQLKLERDVHQRELEDLSSSLESVKLKHEQNIQELMKHFKKEKSEAESHIRMLKAESLEDKNMAKAHLGQLEKLKSQCEKLTEELTHTENENKKLKLKYQSLKEELDKKEKYISTEEEHLRRMEESRLHLKDQLLCLETEQESILGVIGKEIDEACKTFSRDSLEKLKVLTSGPQLHYDPHRWLAESKTKLQWLCEELKERESRERSMRQQLAACRQELRELTEHKESELLCLFEHIERQEQLLEEFHQEKRGLLEETQRKDEEVETLQDRVNALQMSTRVALDHLESVPEKLSLLEDFKDFRGASSLSEKTDGRYSKYSLHGDSVQQRRDDTKPRIKSFRDDRPLSAGSHAHGLDHSSSCQDHSRFLSSPQFSHSLPVFTKRTIATDPASIEGDTTSLPANGTSPQSKKEEHEIKKYKK.

3 positions are modified to phosphoserine: Ser-31, Ser-248, and Ser-290. 2 coiled-coil regions span residues 215 to 822 and 878 to 959; these read VSDR…LETE and EELK…ALQM. Positions 326–346 are disordered; the sequence is QHQVPCISKQPLSHQDDQGDD. Disordered regions lie at residues 991 to 1048 and 1070 to 1102; these read SEKT…DHSR and DPASIEGDTTSLPANGTSPQSKKEEHEIKKYKK. Residues 1009–1027 are compositionally biased toward basic and acidic residues; that stretch reads QQRRDDTKPRIKSFRDDRP. 2 stretches are compositionally biased toward polar residues: residues 1039 to 1048 and 1076 to 1089; these read HSSSCQDHSR and GDTTSLPANGTSPQ. Basic and acidic residues predominate over residues 1090–1102; it reads SKKEEHEIKKYKK.

The protein resides in the cytoplasm. It localises to the cytoskeleton. It is found in the microtubule organizing center. The protein localises to the centrosome. Its subcellular location is the centriole. The protein resides in the spindle pole. This Mus musculus (Mouse) protein is Centrosomal protein of 128 kDa (Cep128).